A 104-amino-acid polypeptide reads, in one-letter code: L-rhamnose mutarotase (104 aa).

Tyr18 is a substrate binding site. His22 acts as the Proton donor in catalysis. Substrate-binding positions include Tyr41 and 76–77 (WW).

It belongs to the rhamnose mutarotase family. Homodimer.

Its subcellular location is the cytoplasm. It carries out the reaction alpha-L-rhamnose = beta-L-rhamnose. It participates in carbohydrate metabolism; L-rhamnose metabolism. Functionally, involved in the anomeric conversion of L-rhamnose. This chain is L-rhamnose mutarotase, found in Burkholderia orbicola (strain MC0-3).